Reading from the N-terminus, the 466-residue chain is Putative outer membrane protein NMB0088 (466 aa).

The first 24 residues, Met1–Ala24, serve as a signal peptide directing secretion.

This sequence belongs to the OmpP1/FadL family.

The protein resides in the cell outer membrane. This Neisseria meningitidis serogroup B (strain ATCC BAA-335 / MC58) protein is Putative outer membrane protein NMB0088.